The following is a 288-amino-acid chain: Single myb histone 4 (288 aa).

3 disordered regions span residues 1–42, 62–87, and 181–206; these read MGAP…PVLS, GLGS…SQPL, and DSLA…KPSK. In terms of domain architecture, HTH myb-type spans 1 to 60; the sequence is MGAPKQKWTSEEEDALRAGVRKHGAGKWRTIQKDPEFSPVLSSRSNIDLKDKWRNLSFSA. Residues 28-56 constitute a DNA-binding region (H-T-H motif); sequence WRTIQKDPEFSPVLSSRSNIDLKDKWRNL. Positions 76-87 are enriched in low complexity; it reads PSSSPSSSSQPL. An H15 domain is found at 113-181; sequence TLPKYGAMIM…KIDKSYRLPD (69 aa). Residues 230–250 are a coiled coil; the sequence is KVADAEAKAHDAHDQTMEAER.

Belongs to the histone H1/H5 family. SMH subfamily. Forms a homodimer and heterodimers.

Its subcellular location is the nucleus. It is found in the chromosome. The protein localises to the nucleolus. It localises to the telomere. In terms of biological role, binds preferentially double-stranded telomeric repeats, but may also bind to the single telomeric strand. This is Single myb histone 4 (SMH4) from Zea mays (Maize).